The chain runs to 219 residues: Alpha N-terminal protein methyltransferase 1 (219 aa).

Residues G64, R69, 111-112, and Q127 each bind S-adenosyl-L-methionine; that span reads LQ.

The protein belongs to the methyltransferase superfamily. NTM1 family.

It is found in the cytoplasm. It catalyses the reaction N-terminal L-alanyl-L-prolyl-L-lysyl-[protein] + 3 S-adenosyl-L-methionine = N-terminal N,N,N-trimethyl-L-alanyl-L-prolyl-L-lysyl-[protein] + 3 S-adenosyl-L-homocysteine + 3 H(+). It carries out the reaction N-terminal L-seryl-L-prolyl-L-lysyl-[protein] + 3 S-adenosyl-L-methionine = N-terminal N,N,N-trimethyl-L-seryl-L-prolyl-L-lysyl-[protein] + 3 S-adenosyl-L-homocysteine + 3 H(+). The catalysed reaction is N-terminal L-prolyl-L-prolyl-L-lysyl-[protein] + 2 S-adenosyl-L-methionine = N-terminal N,N-dimethyl-L-prolyl-L-prolyl-L-lysyl-[protein] + 2 S-adenosyl-L-homocysteine + 2 H(+). Functionally, alpha-N-methyltransferase that methylates the N-terminus of target proteins containing the N-terminal motif [Ala/Pro/Ser]-Pro-Lys when the initiator Met is cleaved. Specifically catalyzes mono-, di- or tri-methylation of exposed alpha-amino group of Ala or Ser residue in the [Ala/Ser]-Pro-Lys motif and mono- or di-methylation of Pro in the Pro-Pro-Lys motif. The chain is Alpha N-terminal protein methyltransferase 1 (tae1) from Schizosaccharomyces pombe (strain 972 / ATCC 24843) (Fission yeast).